The sequence spans 145 residues: Large ribosomal subunit protein uL11 (145 aa).

Belongs to the universal ribosomal protein uL11 family. Part of the ribosomal stalk of the 50S ribosomal subunit. Interacts with L10 and the large rRNA to form the base of the stalk. L10 forms an elongated spine to which L12 dimers bind in a sequential fashion forming a multimeric L10(L12)X complex. Post-translationally, one or more lysine residues are methylated.

Forms part of the ribosomal stalk which helps the ribosome interact with GTP-bound translation factors. The protein is Large ribosomal subunit protein uL11 of Coxiella burnetii (strain CbuK_Q154) (Coxiella burnetii (strain Q154)).